We begin with the raw amino-acid sequence, 388 residues long: Succinate--CoA ligase [ADP-forming] subunit beta (388 aa).

The 236-residue stretch at 9–244 folds into the ATP-grasp domain; the sequence is KQLFAEYGLP…PSQDDPREAH (236 aa). Residues Lys-46, 53–55, Glu-99, Thr-102, and Glu-107 each bind ATP; that span reads GRG. Positions 199 and 213 each coordinate Mg(2+). Substrate-binding positions include Asn-264 and 321-323; that span reads GIV.

Belongs to the succinate/malate CoA ligase beta subunit family. As to quaternary structure, heterotetramer of two alpha and two beta subunits. It depends on Mg(2+) as a cofactor.

It catalyses the reaction succinate + ATP + CoA = succinyl-CoA + ADP + phosphate. The catalysed reaction is GTP + succinate + CoA = succinyl-CoA + GDP + phosphate. The protein operates within carbohydrate metabolism; tricarboxylic acid cycle; succinate from succinyl-CoA (ligase route): step 1/1. In terms of biological role, succinyl-CoA synthetase functions in the citric acid cycle (TCA), coupling the hydrolysis of succinyl-CoA to the synthesis of either ATP or GTP and thus represents the only step of substrate-level phosphorylation in the TCA. The beta subunit provides nucleotide specificity of the enzyme and binds the substrate succinate, while the binding sites for coenzyme A and phosphate are found in the alpha subunit. This is Succinate--CoA ligase [ADP-forming] subunit beta from Stutzerimonas stutzeri (strain A1501) (Pseudomonas stutzeri).